Consider the following 241-residue polypeptide: Purine nucleoside phosphorylase DeoD-type 1 (241 aa).

Position 5 (His5) interacts with a purine D-ribonucleoside. Phosphate contacts are provided by residues Gly21, Arg25, Arg44, and 88–91; that span reads RVGS. Residues 180–182 and 204–205 each bind a purine D-ribonucleoside; these read EME and SD. Asp205 (proton donor) is an active-site residue.

It belongs to the PNP/UDP phosphorylase family. As to quaternary structure, homohexamer; trimer of homodimers.

It catalyses the reaction a purine D-ribonucleoside + phosphate = a purine nucleobase + alpha-D-ribose 1-phosphate. The enzyme catalyses a purine 2'-deoxy-D-ribonucleoside + phosphate = a purine nucleobase + 2-deoxy-alpha-D-ribose 1-phosphate. Its function is as follows. Catalyzes the reversible phosphorolytic breakdown of the N-glycosidic bond in the beta-(deoxy)ribonucleoside molecules, with the formation of the corresponding free purine bases and pentose-1-phosphate. The chain is Purine nucleoside phosphorylase DeoD-type 1 from Vibrio cholerae serotype O1 (strain ATCC 39315 / El Tor Inaba N16961).